The primary structure comprises 317 residues: Protoheme IX farnesyltransferase (317 aa).

A run of 9 helical transmembrane segments spans residues 36–56, 57–77, 108–128, 129–149, 157–177, 184–204, 230–247, 251–273, and 284–304; these read VMVL…ATVN, PVIA…SGCL, LAFG…ASNW, LAAG…SMWL, IVIG…AVTG, LVLF…LALV, IVWY…PVWL, GWLY…VQVY, and AAMG…SALL.

This sequence belongs to the UbiA prenyltransferase family. Protoheme IX farnesyltransferase subfamily.

It is found in the cell inner membrane. It carries out the reaction heme b + (2E,6E)-farnesyl diphosphate + H2O = Fe(II)-heme o + diphosphate. It functions in the pathway porphyrin-containing compound metabolism; heme O biosynthesis; heme O from protoheme: step 1/1. Functionally, converts heme B (protoheme IX) to heme O by substitution of the vinyl group on carbon 2 of heme B porphyrin ring with a hydroxyethyl farnesyl side group. This chain is Protoheme IX farnesyltransferase, found in Methylorubrum populi (strain ATCC BAA-705 / NCIMB 13946 / BJ001) (Methylobacterium populi).